The following is a 294-amino-acid chain: Non-selective voltage-gated ion channel VDAC2 (294 aa).

An N-acetylalanine modification is found at A2. Residues K23 and K31 each contribute to the ATP site. K31 is modified (N6-acetyllysine; alternate). K31 carries the N6-succinyllysine; alternate modification. Residue K31 forms a Glycyl lysine isopeptide (Lys-Gly) (interchain with G-Cter in ubiquitin); alternate linkage. The next 2 membrane-spanning stretches (beta stranded) occupy residues 37 to 46 and 50 to 58; these read LVKLDVKTKS and VEFSTSGSS. Residue K64 forms a Glycyl lysine isopeptide (Lys-Gly) (interchain with G-Cter in ubiquitin) linkage. The chain crosses the membrane as a beta stranded span at residues 65-75; it reads VTGTLETKYKW. Y78 is modified (phosphotyrosine). Transmembrane regions (beta stranded) follow at residues 80–87, 91–100, and 106–115; these read LTFTEKWN, TLGTEIAIED, and LKLTFDTTFS. Phosphothreonine is present on T118. Residue K120 is modified to N6-acetyllysine; alternate. Residue K120 forms a Glycyl lysine isopeptide (Lys-Gly) (interchain with G-Cter in ubiquitin); alternate linkage. A Glycyl lysine isopeptide (Lys-Gly) (interchain with G-Cter in ubiquitin) cross-link involves residue K121. The next 4 beta stranded transmembrane spans lie at 122–131, 134–141, 148–156, and 161–169; these read SGKIKSSYKR, INLGCDVD, AIHGSAVFG, and LAGYQMTFD. Residue K172 forms a Glycyl lysine isopeptide (Lys-Gly) (interchain with G-Cter in ubiquitin) linkage. 6 beta stranded membrane-spanning segments follow: residues 174-186, 189-196, 200-209, 213-222, 229-238, and 242-249; these read KLTR…GYRT, FQLHTNVN, EFGGSIYQKV, LDTSVNLAWT, RFGIAAKYQL, and ASISAKVN. S251 is modified (phosphoserine). NAD(+) contacts are provided by residues 253–255 and 271–275; these read LIG and SALVD. The next 2 beta stranded transmembrane spans lie at 253–262 and 265–274; these read LIGVGYTQTL and GVKLTLSALV. An N6-acetyllysine; alternate modification is found at K277. Residue K277 forms a Glycyl lysine isopeptide (Lys-Gly) (interchain with G-Cter in ubiquitin); alternate linkage. The beta stranded transmembrane segment at 284–293 threads the bilayer; it reads HKLGLALELE.

It belongs to the eukaryotic mitochondrial porin family. Monomer, homodimer and higher order oligomers; formation of higher order structures is necessary for scramblase activity. Interacts with ARMC12 in a TBC1D21-dependent manner. Interacts with KLC3. Interacts with SPATA33. Interacts with PPP3CC in a SPATA33-dependent manner. Ubiquitinated by PRKN during mitophagy, leading to its degradation and enhancement of mitophagy. Deubiquitinated by USP30.

The protein resides in the mitochondrion outer membrane. The protein localises to the membrane. It catalyses the reaction chloride(in) = chloride(out). The catalysed reaction is K(+)(in) = K(+)(out). The enzyme catalyses a 1,2-diacyl-sn-glycero-3-phospho-L-serine(in) = a 1,2-diacyl-sn-glycero-3-phospho-L-serine(out). It carries out the reaction a 1,2-diacyl-sn-glycero-3-phosphocholine(in) = a 1,2-diacyl-sn-glycero-3-phosphocholine(out). It catalyses the reaction a 1,2-diacyl-sn-glycero-3-phospho-(1D-myo-inositol)(in) = a 1,2-diacyl-sn-glycero-3-phospho-(1D-myo-inositol)(out). Its function is as follows. Non-selective voltage-gated ion channel that mediates the transport of anions and cations through the mitochondrion outer membrane and plasma membrane. The channel adopts an open conformation at zero mV and a closed conformation at both positive and negative potentials. There are two populations of channels; the main that functions in a lower open-state conductance with lower ion selectivity, that switch, in a voltage-dependent manner, from the open to a low-conducting 'closed' state and the other that has a normal ion selectivity in the typical high conductance, 'open' state. Binds various lipids, including the sphingolipid ceramide, the phospholipid phosphatidylcholine, and the sterols cholesterol and oxysterol. Binding of ceramide promotes the mitochondrial outer membrane permeabilization (MOMP) apoptotic pathway. In terms of biological role, catalyzes the scrambling of phospholipids across the outer mitochondrial membrane; the mechanism is unrelated to channel activity and is capable of translocating both anionic and zwitterionic phospholipids. This is Non-selective voltage-gated ion channel VDAC2 from Oryctolagus cuniculus (Rabbit).